The sequence spans 399 residues: CCA-adding enzyme (399 aa).

ATP contacts are provided by Gly32 and Arg35. Positions 32 and 35 each coordinate CTP. 2 residues coordinate Mg(2+): Asp45 and Asp47. Residues Arg116, Asp159, Arg162, Arg165, and Arg168 each coordinate ATP. Arg116, Asp159, Arg162, Arg165, and Arg168 together coordinate CTP.

This sequence belongs to the tRNA nucleotidyltransferase/poly(A) polymerase family. Bacterial CCA-adding enzyme type 3 subfamily. In terms of assembly, homodimer. Requires Mg(2+) as cofactor.

It carries out the reaction a tRNA precursor + 2 CTP + ATP = a tRNA with a 3' CCA end + 3 diphosphate. The enzyme catalyses a tRNA with a 3' CCA end + 2 CTP + ATP = a tRNA with a 3' CCACCA end + 3 diphosphate. In terms of biological role, catalyzes the addition and repair of the essential 3'-terminal CCA sequence in tRNAs without using a nucleic acid template. Adds these three nucleotides in the order of C, C, and A to the tRNA nucleotide-73, using CTP and ATP as substrates and producing inorganic pyrophosphate. tRNA 3'-terminal CCA addition is required both for tRNA processing and repair. Also involved in tRNA surveillance by mediating tandem CCA addition to generate a CCACCA at the 3' terminus of unstable tRNAs. While stable tRNAs receive only 3'-terminal CCA, unstable tRNAs are marked with CCACCA and rapidly degraded. This is CCA-adding enzyme from Streptococcus pneumoniae (strain CGSP14).